Consider the following 288-residue polypeptide: Anthranilate synthase beta subunit 1, chloroplastic (288 aa).

Residues 1-58 (MACSHLAAAAAAASPAAARSPAASSAATASAFARLSATPRVASGGLAVRGQRGVAAVV) constitute a chloroplast transit peptide. One can recognise a Glutamine amidotransferase type-1 domain in the interval 83-282 (PIIVIDNYDS…VRFIEELEKQ (200 aa)). Position 134-136 (134-136 (GPG)) interacts with L-glutamine. Cys161 functions as the Nucleophile in the catalytic mechanism. Residues Gln165 and 215 to 216 (SL) each bind L-glutamine. Residues His256 and Glu258 contribute to the active site.

Heterotetramer consisting of two non-identical subunits: a beta subunit and a large alpha subunit. As to expression, expressed in roots and leaves.

It is found in the plastid. Its subcellular location is the chloroplast. The enzyme catalyses chorismate + L-glutamine = anthranilate + pyruvate + L-glutamate + H(+). Its pathway is amino-acid biosynthesis; L-tryptophan biosynthesis; L-tryptophan from chorismate: step 1/5. Functionally, part of a heterotetrameric complex that catalyzes the two-step biosynthesis of anthranilate, an intermediate in the biosynthesis of L-tryptophan. In the first step, the glutamine-binding beta subunit of anthranilate synthase (AS) provides the glutamine amidotransferase activity which generates ammonia as a substrate that, along with chorismate, is used in the second step, catalyzed by the large alpha subunit of AS to produce anthranilate. This chain is Anthranilate synthase beta subunit 1, chloroplastic, found in Oryza sativa subsp. japonica (Rice).